Here is a 91-residue protein sequence, read N- to C-terminus: MEARDVLKRPVITEKSSEAMAEDKYTFDVDTRANKTQVKIAVEEIFDVKVDSVNIINYKPKKKRMGRYQGYTNKRRKAIVKLKEGSIDLFN.

It belongs to the universal ribosomal protein uL23 family. Part of the 50S ribosomal subunit. Contacts protein L29, and trigger factor when it is bound to the ribosome.

Its function is as follows. One of the early assembly proteins it binds 23S rRNA. One of the proteins that surrounds the polypeptide exit tunnel on the outside of the ribosome. Forms the main docking site for trigger factor binding to the ribosome. The chain is Large ribosomal subunit protein uL23 from Staphylococcus epidermidis (strain ATCC 35984 / DSM 28319 / BCRC 17069 / CCUG 31568 / BM 3577 / RP62A).